The following is a 280-amino-acid chain: Small ribosomal subunit protein uS2 (280 aa).

It belongs to the universal ribosomal protein uS2 family.

The chain is Small ribosomal subunit protein uS2 from Desulforapulum autotrophicum (strain ATCC 43914 / DSM 3382 / VKM B-1955 / HRM2) (Desulfobacterium autotrophicum).